A 234-amino-acid chain; its full sequence is Ribonuclease HII (234 aa).

In terms of domain architecture, RNase H type-2 spans 30 to 221; the sequence is GPVAGVDEAG…VRNAAMGSSL (192 aa). A divalent metal cation contacts are provided by Asp-36, Glu-37, and Asp-130.

Belongs to the RNase HII family. It depends on Mn(2+) as a cofactor. Mg(2+) is required as a cofactor.

Its subcellular location is the cytoplasm. It catalyses the reaction Endonucleolytic cleavage to 5'-phosphomonoester.. In terms of biological role, endonuclease that specifically degrades the RNA of RNA-DNA hybrids. This Mycobacteroides abscessus (strain ATCC 19977 / DSM 44196 / CCUG 20993 / CIP 104536 / JCM 13569 / NCTC 13031 / TMC 1543 / L948) (Mycobacterium abscessus) protein is Ribonuclease HII.